Consider the following 342-residue polypeptide: Serine/threonine-protein kinase SAPK1 (342 aa).

The Protein kinase domain maps to tyrosine 4–phenylalanine 260. ATP-binding positions include isoleucine 10–alanine 18 and lysine 33. Residue aspartate 123 is the Proton acceptor of the active site. The segment at glutamate 253–leucine 342 is C-terminal.

It belongs to the protein kinase superfamily. Ser/Thr protein kinase family. Post-translationally, phosphorylated. Expressed in leaf blades, leaf sheaths and roots. Expressed in shoots and roots of young seedlings.

It carries out the reaction L-seryl-[protein] + ATP = O-phospho-L-seryl-[protein] + ADP + H(+). The catalysed reaction is L-threonyl-[protein] + ATP = O-phospho-L-threonyl-[protein] + ADP + H(+). Activated by phosphorylation in response to hyperosmotic stress within 5 minutes. May play a role in signal transduction of hyperosmotic response. This chain is Serine/threonine-protein kinase SAPK1 (SAPK1), found in Oryza sativa subsp. japonica (Rice).